We begin with the raw amino-acid sequence, 278 residues long: Myb/SANT-like DNA-binding domain-containing protein 1 (278 aa).

Residues 1–27 (MVRGAGPGPSLSALSHPTGASGMAAAE) are disordered. The region spanning 44 to 129 (RNWTDAEMRG…PDWPYYLAID (86 aa)) is the Myb-like domain. The disordered stretch occupies residues 138–168 (SCDGKLPDSQPPGPSTSQTEASLSPPAKSTP).

In Homo sapiens (Human), this protein is Myb/SANT-like DNA-binding domain-containing protein 1 (MSANTD1).